Here is a 276-residue protein sequence, read N- to C-terminus: Dermonecrotic toxin LlSicTox-alphaIV2iii (276 aa).

Residue histidine 5 is part of the active site. Mg(2+) contacts are provided by glutamate 25 and aspartate 27. Histidine 41 (nucleophile) is an active-site residue. 2 disulfide bridges follow: cysteine 45–cysteine 51 and cysteine 47–cysteine 193. Aspartate 85 is a binding site for Mg(2+).

The protein belongs to the arthropod phospholipase D family. Class II subfamily. Mg(2+) is required as a cofactor. Expressed by the venom gland.

Its subcellular location is the secreted. It carries out the reaction an N-(acyl)-sphingosylphosphocholine = an N-(acyl)-sphingosyl-1,3-cyclic phosphate + choline. The catalysed reaction is an N-(acyl)-sphingosylphosphoethanolamine = an N-(acyl)-sphingosyl-1,3-cyclic phosphate + ethanolamine. The enzyme catalyses a 1-acyl-sn-glycero-3-phosphocholine = a 1-acyl-sn-glycero-2,3-cyclic phosphate + choline. It catalyses the reaction a 1-acyl-sn-glycero-3-phosphoethanolamine = a 1-acyl-sn-glycero-2,3-cyclic phosphate + ethanolamine. Dermonecrotic toxins cleave the phosphodiester linkage between the phosphate and headgroup of certain phospholipids (sphingolipid and lysolipid substrates), forming an alcohol (often choline) and a cyclic phosphate. This toxin acts on sphingomyelin (SM). It may also act on ceramide phosphoethanolamine (CPE), lysophosphatidylcholine (LPC) and lysophosphatidylethanolamine (LPE), but not on lysophosphatidylserine (LPS), and lysophosphatidylglycerol (LPG). It acts by transphosphatidylation, releasing exclusively cyclic phosphate products as second products. Induces dermonecrosis, hemolysis, increased vascular permeability, edema, inflammatory response, and platelet aggregation. In Loxosceles laeta (South American recluse spider), this protein is Dermonecrotic toxin LlSicTox-alphaIV2iii.